Here is a 514-residue protein sequence, read N- to C-terminus: 2,3-bisphosphoglycerate-independent phosphoglycerate mutase (514 aa).

2 residues coordinate Mn(2+): Asp14 and Ser64. Residue Ser64 is the Phosphoserine intermediate of the active site. Residues His125, 155–156, Arg187, Arg193, 263–266, and Lys336 contribute to the substrate site; these read RD and RADR. Residues Asp403, His407, Asp444, His445, and His463 each coordinate Mn(2+).

This sequence belongs to the BPG-independent phosphoglycerate mutase family. Monomer. The cofactor is Mn(2+).

The catalysed reaction is (2R)-2-phosphoglycerate = (2R)-3-phosphoglycerate. It functions in the pathway carbohydrate degradation; glycolysis; pyruvate from D-glyceraldehyde 3-phosphate: step 3/5. In terms of biological role, catalyzes the interconversion of 2-phosphoglycerate and 3-phosphoglycerate. The chain is 2,3-bisphosphoglycerate-independent phosphoglycerate mutase from Shewanella sediminis (strain HAW-EB3).